We begin with the raw amino-acid sequence, 383 residues long: MGSIGAASMEFCFDVFKELKVHHANDNMLYSPFAILSTLAMVFLGAKDSTRTQINKVVHFDKLPGFGDSIEAQCGTSVNVHSSLRDILNQITKQNDAYSFSLASRLYAQETYTVVPEYLQCVKELYRGGLESVNFQTAADQARGLINAWVESQTNGIIRNILQPSSVDSQTAMVLVNAIAFKGLWEKAFKAEDTQTIPFRVTEQESKPVQMMYQIGSFKVASMASEKMKILELPFASGTMSMLVLLPDDVSGLEQLESIISFEKLTEWTSSSIMEERKVKVYLPRMKMEEKYNLTSLLMAMGITDLFSSSANLSGISSVGSLKISQAVHAAHAEINEAGRDVVGSAEAGVDATEEFRADHPFLFCVKHIETNAILLFGRCVSP.

Glycine 2 is subject to N-acetylglycine. Positions 22–48 form a signal peptide, not cleaved; it reads HHANDNMLYSPFAILSTLAMVFLGAKD. Serine 69 carries the phosphoserine modification. An intrachain disulfide couples cysteine 74 to cysteine 121. Asparagine 293 and asparagine 312 each carry an N-linked (GlcNAc...) asparagine glycan. Residue serine 345 is modified to Phosphoserine.

It belongs to the serpin family. Ov-serpin subfamily. In terms of processing, the signal sequence is not cleaved. The functional signal for membrane translocation of ovalbumin becomes accessible when the nascent chain is 50 to 60 residues long. The hydrophobic sequence which lies between residues 27 and 43 folds back on the preceding residues to form an amphipathic hairpin structure which is the signal element recognized by the membrane. As to expression, major protein of egg white.

The protein resides in the secreted. Storage protein of egg white. Lack protease inhibitory activity. This chain is Ovalbumin (SERPINB14), found in Coturnix japonica (Japanese quail).